We begin with the raw amino-acid sequence, 132 residues long: Fibroblast growth factor 1 (132 aa).

Heparin contacts are provided by residues Asn-10 and Lys-108–Lys-120.

It belongs to the heparin-binding growth factors family.

Its subcellular location is the secreted. It is found in the cytoplasm. The protein resides in the cell cortex. It localises to the cytosol. The protein localises to the nucleus. Plays an important role in the regulation of cell survival, cell division, angiogenesis, cell differentiation and cell migration. Functions as a potent mitogen in vitro. Acts as a ligand for FGFR1 and integrins. Binds to FGFR1 in the presence of heparin leading to FGFR1 dimerization and activation via sequential autophosphorylation on tyrosine residues which act as docking sites for interacting proteins, leading to the activation of several signaling cascades. Binds to integrins. Its binding to integrins and subsequent ternary complex formation with integrins and FGFR1 are essential for FGF1 signaling. The protein is Fibroblast growth factor 1 (fgf1) of Notophthalmus viridescens (Eastern newt).